We begin with the raw amino-acid sequence, 354 residues long: Ion-translocating oxidoreductase complex subunit D (354 aa).

5 consecutive transmembrane segments (helical) span residues I19–G39, F40–V60, F70–P89, Y94–G116, and A123–A143. T186 is subject to FMN phosphoryl threonine. A run of 5 helical transmembrane segments spans residues L215–V235, W242–F262, M266–A286, L300–P320, and D321–T341.

This sequence belongs to the NqrB/RnfD family. In terms of assembly, the complex is composed of six subunits: RnfA, RnfB, RnfC, RnfD, RnfE and RnfG. FMN serves as cofactor.

The protein localises to the cell inner membrane. Functionally, part of a membrane-bound complex that couples electron transfer with translocation of ions across the membrane. The polypeptide is Ion-translocating oxidoreductase complex subunit D (Mannheimia succiniciproducens (strain KCTC 0769BP / MBEL55E)).